The primary structure comprises 331 residues: Glycerol-3-phosphate dehydrogenase [NAD(P)+] (331 aa).

Positions 11, 30, and 105 each coordinate NADPH. Sn-glycerol 3-phosphate contacts are provided by Lys-105, Gly-134, and Ser-136. Residue Ala-138 coordinates NADPH. The sn-glycerol 3-phosphate site is built by Lys-189, Asp-242, Ser-252, Arg-253, and Asn-254. Lys-189 functions as the Proton acceptor in the catalytic mechanism. NADPH is bound at residue Arg-253. Val-277 and Glu-279 together coordinate NADPH.

This sequence belongs to the NAD-dependent glycerol-3-phosphate dehydrogenase family.

Its subcellular location is the cytoplasm. It catalyses the reaction sn-glycerol 3-phosphate + NAD(+) = dihydroxyacetone phosphate + NADH + H(+). The catalysed reaction is sn-glycerol 3-phosphate + NADP(+) = dihydroxyacetone phosphate + NADPH + H(+). It participates in membrane lipid metabolism; glycerophospholipid metabolism. In terms of biological role, catalyzes the reduction of the glycolytic intermediate dihydroxyacetone phosphate (DHAP) to sn-glycerol 3-phosphate (G3P), the key precursor for phospholipid synthesis. The polypeptide is Glycerol-3-phosphate dehydrogenase [NAD(P)+] (Janthinobacterium sp. (strain Marseille) (Minibacterium massiliensis)).